Here is a 156-residue protein sequence, read N- to C-terminus: ATP synthase subunit b 1 (156 aa).

A helical transmembrane segment spans residues L7–L29.

Belongs to the ATPase B chain family. F-type ATPases have 2 components, F(1) - the catalytic core - and F(0) - the membrane proton channel. F(1) has five subunits: alpha(3), beta(3), gamma(1), delta(1), epsilon(1). F(0) has three main subunits: a(1), b(2) and c(10-14). The alpha and beta chains form an alternating ring which encloses part of the gamma chain. F(1) is attached to F(0) by a central stalk formed by the gamma and epsilon chains, while a peripheral stalk is formed by the delta and b chains.

It is found in the cell inner membrane. Functionally, f(1)F(0) ATP synthase produces ATP from ADP in the presence of a proton or sodium gradient. F-type ATPases consist of two structural domains, F(1) containing the extramembraneous catalytic core and F(0) containing the membrane proton channel, linked together by a central stalk and a peripheral stalk. During catalysis, ATP synthesis in the catalytic domain of F(1) is coupled via a rotary mechanism of the central stalk subunits to proton translocation. Its function is as follows. Component of the F(0) channel, it forms part of the peripheral stalk, linking F(1) to F(0). In Vibrio campbellii (strain ATCC BAA-1116), this protein is ATP synthase subunit b 1.